Here is a 408-residue protein sequence, read N- to C-terminus: uncharacterized protein (408 aa).

This is an uncharacterized protein from Methanocaldococcus jannaschii (strain ATCC 43067 / DSM 2661 / JAL-1 / JCM 10045 / NBRC 100440) (Methanococcus jannaschii).